The sequence spans 627 residues: 2-oxoacid:ferredoxin oxidoreductase 1, subunit alpha (627 aa).

The short motif at 253–257 is the YPITP motif element; the sequence is YPITP. The substrate site is built by T256 and R344.

Heterodimer composed of an alpha and a beta subunit.

The enzyme catalyses a 2-oxocarboxylate + 2 oxidized [2Fe-2S]-[ferredoxin] + CoA = an acyl-CoA + 2 reduced [2Fe-2S]-[ferredoxin] + CO2 + H(+). Inhibited by low concentration of 4-fluoro-7-nitrobenzofurazan (NBD-F). In terms of biological role, catalyzes the coenzyme A-dependent oxidative decarboxylation of different 2-oxoacids such as 2-oxoglutarate, pyruvate and 2-oxobutyrate to form their CoA derivatives. This Sulfurisphaera tokodaii (strain DSM 16993 / JCM 10545 / NBRC 100140 / 7) (Sulfolobus tokodaii) protein is 2-oxoacid:ferredoxin oxidoreductase 1, subunit alpha.